The following is a 369-amino-acid chain: Putative glutamate--cysteine ligase 2-1 (369 aa).

The protein belongs to the glutamate--cysteine ligase type 2 family. YbdK subfamily.

It carries out the reaction L-cysteine + L-glutamate + ATP = gamma-L-glutamyl-L-cysteine + ADP + phosphate + H(+). ATP-dependent carboxylate-amine ligase which exhibits weak glutamate--cysteine ligase activity. The polypeptide is Putative glutamate--cysteine ligase 2-1 (Rhodococcus jostii (strain RHA1)).